Here is an 88-residue protein sequence, read N- to C-terminus: Translation initiation factor IF-1 2 (88 aa).

The region spanning 1–72 is the S1-like domain; it reads MAKEELIEMQ…TKGRITFRHL (72 aa).

This sequence belongs to the IF-1 family. Component of the 30S ribosomal translation pre-initiation complex which assembles on the 30S ribosome in the order IF-2 and IF-3, IF-1 and N-formylmethionyl-tRNA(fMet); mRNA recruitment can occur at any time during PIC assembly.

The protein resides in the cytoplasm. One of the essential components for the initiation of protein synthesis. Stabilizes the binding of IF-2 and IF-3 on the 30S subunit to which N-formylmethionyl-tRNA(fMet) subsequently binds. Helps modulate mRNA selection, yielding the 30S pre-initiation complex (PIC). Upon addition of the 50S ribosomal subunit IF-1, IF-2 and IF-3 are released leaving the mature 70S translation initiation complex. This Acidovorax sp. (strain JS42) protein is Translation initiation factor IF-1 2.